The following is a 334-amino-acid chain: Ribosomal RNA small subunit methyltransferase H (334 aa).

S-adenosyl-L-methionine is bound by residues 39–41 (GGH), Asp-59, Phe-83, Asp-100, and Gln-107. The interval 303-334 (ERTQAHGAERSDMRRAERPDARRAEHGEVLPP) is disordered.

This sequence belongs to the methyltransferase superfamily. RsmH family.

Its subcellular location is the cytoplasm. The catalysed reaction is cytidine(1402) in 16S rRNA + S-adenosyl-L-methionine = N(4)-methylcytidine(1402) in 16S rRNA + S-adenosyl-L-homocysteine + H(+). Its function is as follows. Specifically methylates the N4 position of cytidine in position 1402 (C1402) of 16S rRNA. The polypeptide is Ribosomal RNA small subunit methyltransferase H (Verminephrobacter eiseniae (strain EF01-2)).